The chain runs to 472 residues: Replicative helicase loading/DNA remodeling protein DnaB (472 aa).

The tract at residues 1-112 (MADYWKDVLP…ERLFIYELLP (112 aa)) is DDBH1. The tract at residues 210-302 (DLFLAGLSET…VHLREGEQPA (93 aa)) is DDBH2-1. The interval 303–411 (EEDSLDGKLI…RQYLEWAEGK (109 aa)) is DDBH2-2. A disordered region spans residues 415–472 (SKRNQKVIREEKLPDWMTEKETASDSESGQQKLHPQDLEEQKKKMMEEMQKLKKYSAY). Composition is skewed to basic and acidic residues over residues 421-437 (VIRE…KETA) and 448-465 (HPQD…EMQK).

It belongs to the DnaB/DnaD family. As to quaternary structure, homotetramer. Also forms higher-order oligomers, can be induced by some ssDNA. The DNA replisome assembles sequentially on oriC in this order; DnaA, DnaD, DnaB, DnaI-DnaC helicase. In atomic force microscopy forms a square with a small central hole. Part of the replication restart primosome which assembles in this order; PriA, DnaD then DnaB. The preferred DNA substrate mimics an arrested DNA replication fork with unreplicated lagging strand. Interacts with DnaC, but probably not as a tetramer. Interacts with DnaD but no interaction with PriA was seen. Interacts with cell cycle regulator CcrZ. In early growth phase only full-length protein is detected, during late growth and stationary phase full-length and C-terminally truncated proteins are seen (at protein level). Truncated protein is only seen in cytoplasmic fractions.

It localises to the cytoplasm. The protein localises to the cell membrane. Functionally, helps DnaI load the DnaC replicative helicase onto single-stranded (ss)DNA. During DNA replication from the origin of replication (oriC) in the DNA replisome, DnaD is required after DnaA, before DnaB and before subsequent helicase DnaC loading. Component of the replication restart primosome, which reloads the replicative helicase on sites other than oriC. DnaB, DnaD and DnaI may also be required for a PriA-independent pathway of replication fork restart. DnaB and DnaD work together to allow DnaB access to ssDNA. DNA replication at oriC might originate on the inner face of the cell membrane; DnaB is essential for both replication initiation and cell membrane attachment of the origin region of the chromosome and plasmids. Weakly binds ssDNA, preferentially binds double-stranded (ds)DNA, and replication fork-like substrates. Remodels DNA, laterally compacts supercoiled plasmid and linear DNA, forms beads along the dsDNA. Together DnaB and DnaD form bipolar complexes on plasmid DNA. DnaB and DnaD are also required to load helicase on the repN plasmid origin of replication (oriN). This chain is Replicative helicase loading/DNA remodeling protein DnaB, found in Bacillus subtilis (strain 168).